The primary structure comprises 511 residues: Sphingosine-1-phosphate transporter MFSD2B (511 aa).

Helical transmembrane passes span 108–128, 136–156, 236–256, 280–300, 323–343, 357–377, 379–399, 415–435, and 462–482; these read MPWM…LWFV, VLWY…YHVP, IAAG…FLGV, TMQF…SAAV, NLVL…QWFL, LMIP…AYVV, VASG…LPDV, AIFY…ALGI, and LLIG…LAFY.

Belongs to the major facilitator superfamily.

The protein resides in the cell membrane. It catalyses the reaction sphing-4-enine 1-phosphate(in) = sphing-4-enine 1-phosphate(out). The enzyme catalyses sphinganine 1-phosphate(in) = sphinganine 1-phosphate(out). The catalysed reaction is sphinga-4E,14Z-dienine-1-phosphate(in) = sphinga-4E,14Z-dienine-1-phosphate(out). Functionally, lipid transporter that specifically mediates export of sphingosine-1-phosphate in red blood cells and platelets. Sphingosine-1-phosphate is a signaling sphingolipid and its export from red blood cells into in the plasma is required for red blood cell morphology. Sphingosine-1-phosphate export from platelets is required for platelet aggregation and thrombus formation. In addition to export, also able to mediate S1P import. This chain is Sphingosine-1-phosphate transporter MFSD2B, found in Xenopus tropicalis (Western clawed frog).